Here is a 904-residue protein sequence, read N- to C-terminus: DNA mismatch repair protein MutS (904 aa).

655–662 (GPNMGGKS) provides a ligand contact to ATP.

Belongs to the DNA mismatch repair MutS family.

This protein is involved in the repair of mismatches in DNA. It is possible that it carries out the mismatch recognition step. This protein has a weak ATPase activity. This chain is DNA mismatch repair protein MutS, found in Rhizorhabdus wittichii (strain DSM 6014 / CCUG 31198 / JCM 15750 / NBRC 105917 / EY 4224 / RW1) (Sphingomonas wittichii).